The sequence spans 125 residues: S-adenosylmethionine decarboxylase proenzyme (125 aa).

The active-site Schiff-base intermediate with substrate; via pyruvic acid is the Ser-61. Pyruvic acid (Ser); by autocatalysis is present on Ser-61. Residue His-66 is the Proton acceptor; for processing activity of the active site. The active-site Proton donor; for catalytic activity is Cys-81.

This sequence belongs to the prokaryotic AdoMetDC family. Type 1 subfamily. As to quaternary structure, heterotetramer of two alpha and two beta chains arranged as a dimer of alpha/beta heterodimers. Requires pyruvate as cofactor. Post-translationally, is synthesized initially as an inactive proenzyme. Formation of the active enzyme involves a self-maturation process in which the active site pyruvoyl group is generated from an internal serine residue via an autocatalytic post-translational modification. Two non-identical subunits are generated from the proenzyme in this reaction, and the pyruvate is formed at the N-terminus of the alpha chain, which is derived from the carboxyl end of the proenzyme. The post-translation cleavage follows an unusual pathway, termed non-hydrolytic serinolysis, in which the side chain hydroxyl group of the serine supplies its oxygen atom to form the C-terminus of the beta chain, while the remainder of the serine residue undergoes an oxidative deamination to produce ammonia and the pyruvoyl group blocking the N-terminus of the alpha chain.

It carries out the reaction S-adenosyl-L-methionine + H(+) = S-adenosyl 3-(methylsulfanyl)propylamine + CO2. Its pathway is amine and polyamine biosynthesis; S-adenosylmethioninamine biosynthesis; S-adenosylmethioninamine from S-adenosyl-L-methionine: step 1/1. Functionally, catalyzes the decarboxylation of S-adenosylmethionine to S-adenosylmethioninamine (dcAdoMet), the propylamine donor required for the synthesis of the polyamines spermine and spermidine from the diamine putrescine. The chain is S-adenosylmethionine decarboxylase proenzyme from Prochlorococcus marinus (strain MIT 9313).